A 367-amino-acid polypeptide reads, in one-letter code: Putative F-box protein At4g10190 (367 aa).

Positions 3–53 (KRNIVDLPEDLVMEILARVPTVTLVRLQSTSKRWNVLIEDKRFAEQHFTNA) constitute an F-box domain.

This Arabidopsis thaliana (Mouse-ear cress) protein is Putative F-box protein At4g10190.